We begin with the raw amino-acid sequence, 401 residues long: Heat shock transcription factor, Y-linked (401 aa).

Residues 1–11 (MAHVSSETQDV) show a composition bias toward polar residues. The tract at residues 1–30 (MAHVSSETQDVSPKDELTASEASTRSPLCE) is disordered. A DNA-binding region spans residues 76–194 (LSLNFPRKLW…PQLLVRVKRR (119 aa)).

The protein belongs to the HSF family. Testis-specific. Present in Sertoli cells and spermatogenic cells (at protein level).

The protein resides in the nucleus. The protein localises to the cytoplasm. The sequence is that of Heat shock transcription factor, Y-linked (HSFY1) from Homo sapiens (Human).